The sequence spans 158 residues: 2-C-methyl-D-erythritol 2,4-cyclodiphosphate synthase (158 aa).

A divalent metal cation contacts are provided by aspartate 9 and histidine 11. Residues aspartate 9–histidine 11 and histidine 35–serine 36 each bind 4-CDP-2-C-methyl-D-erythritol 2-phosphate. An a divalent metal cation-binding site is contributed by histidine 43. 4-CDP-2-C-methyl-D-erythritol 2-phosphate-binding positions include aspartate 57–glycine 59, phenylalanine 62–aspartate 66, alanine 101–alanine 107, threonine 133–glutamate 136, phenylalanine 140, and arginine 143.

This sequence belongs to the IspF family. As to quaternary structure, homotrimer. It depends on a divalent metal cation as a cofactor.

The enzyme catalyses 4-CDP-2-C-methyl-D-erythritol 2-phosphate = 2-C-methyl-D-erythritol 2,4-cyclic diphosphate + CMP. It functions in the pathway isoprenoid biosynthesis; isopentenyl diphosphate biosynthesis via DXP pathway; isopentenyl diphosphate from 1-deoxy-D-xylulose 5-phosphate: step 4/6. Functionally, involved in the biosynthesis of isopentenyl diphosphate (IPP) and dimethylallyl diphosphate (DMAPP), two major building blocks of isoprenoid compounds. Catalyzes the conversion of 4-diphosphocytidyl-2-C-methyl-D-erythritol 2-phosphate (CDP-ME2P) to 2-C-methyl-D-erythritol 2,4-cyclodiphosphate (ME-CPP) with a corresponding release of cytidine 5-monophosphate (CMP). The protein is 2-C-methyl-D-erythritol 2,4-cyclodiphosphate synthase of Bacillus velezensis (strain DSM 23117 / BGSC 10A6 / LMG 26770 / FZB42) (Bacillus amyloliquefaciens subsp. plantarum).